The following is a 586-amino-acid chain: BTB/POZ domain and ankyrin repeat-containing protein NPR1 (586 aa).

One can recognise a BTB domain in the interval 63–139; that stretch reads SDADIVVEGI…VYTGKLKPSP (77 aa). The C2HC NPR-type zinc-finger motif lies at 142–156; it reads VSTCVHNVCAHDACR. Zn(2+) is bound by residues Cys-145, Cys-150, His-152, and Cys-155. 3 ANK repeats span residues 266-296, 298-325, and 329-358; these read KRIR…TLDE, NALH…DVNL, and RGYT…RASE. The segment at 388-522 is salicylic acid-binding core (SBC); the sequence is EANKDRICID…LDKFIDDDLP (135 aa). Arg-433 is a binding site for salicylate. Positions 561-586 are disordered; the sequence is NLSGLSSSSSTTSPEKIGANQKVREP. The segment covering 562–573 has biased composition (low complexity); it reads LSGLSSSSSTTS.

This sequence belongs to the plant 'ANKYRIN-BTB/POZ' family. 'NPR1-like' subfamily. As to expression, highly expressed in leaves. Expressed at low levels in roots and stems.

It localises to the cytoplasm. The protein resides in the nucleus. It is found in the nuclear body. Its pathway is protein modification; protein ubiquitination. Its function is as follows. Salicylic acid (SA)-binding substrate-specific adapter of an E3 ubiquitin-protein ligase complex (CUL3-RBX1-BTB) which mediates the ubiquitination and subsequent proteasomal degradation of target proteins. Transcription cofactor that represses gene expression in the absence of salicylic acid (SA), when attached to negative cis-elements (W-box) with WRKY transcription factors, but stimulates gene expression upon activation by SA, when sumoylated and attached to positive cis-elements (as-1) with TGA transcription factors, thus confering immunity through a series of gene regulations ending in a significant increase in antimicrobial and defense genes expression. Probable component of the salicylic acid (SA) defense signaling pathway and pathogen-induced systemic acquired resistance (SAR). May be involved in disease resistance against fungal pathogens. May be involved in tolerance to salt and osmotic stresses. The sequence is that of BTB/POZ domain and ankyrin repeat-containing protein NPR1 from Malus hupehensis (Chinese crab apple).